We begin with the raw amino-acid sequence, 886 residues long: Microsomal triacylglycerol transfer protein (886 aa).

The first 27 residues, 1–27 (MENKNKKCLRTLLLLALFLGLLEDGKT), serve as a signal peptide directing secretion. The 624-residue stretch at 30 to 653 (IAPNSQQIFK…SQASSFKLGI (624 aa)) folds into the Vitellogenin domain. Residues asparagine 358, asparagine 484, asparagine 502, and asparagine 616 are each glycosylated (N-linked (GlcNAc...) asparagine).

It is found in the endoplasmic reticulum. The protein localises to the golgi apparatus. It carries out the reaction a 1,2-diacyl-sn-glycero-3-phosphocholine(in) = a 1,2-diacyl-sn-glycero-3-phosphocholine(out). It catalyses the reaction a 1,2-diacyl-sn-glycero-3-phosphoethanolamine(in) = a 1,2-diacyl-sn-glycero-3-phosphoethanolamine(out). In terms of biological role, catalyzes the transport of phospholipids such as phosphatidylethanolamine (1,2-diacyl-sn-glycero-3-phosphoethanolamine) and phosphatidylcholine (1,2-diacyl-sn-glycero-3-phosphocholine) between membranes. Required for the assembly and secretion of plasma lipoproteins that contain apolipoprotein B. The protein is Microsomal triacylglycerol transfer protein of Drosophila melanogaster (Fruit fly).